A 439-amino-acid chain; its full sequence is Enolase 1-1 (439 aa).

Thr85 carries the post-translational modification Phosphothreonine. Positions 159 and 168 each coordinate substrate. Glu211 functions as the Proton donor in the catalytic mechanism. Asp246 is a Mg(2+) binding site. Phosphoserine is present on residues Ser249 and Ser250. Tyr253 carries the post-translational modification Phosphotyrosine. Residues Glu295 and Asp320 each contribute to the substrate site. Glu295 and Asp320 together coordinate Mg(2+). Lys345 acts as the Proton acceptor in catalysis. Position 351 is a phosphoserine (Ser351). A Phosphothreonine modification is found at Thr353. Ser355 bears the Phosphoserine mark. Residues 372 to 375 and Lys396 each bind substrate; that span reads SHRS. The residue at position 421 (Ser421) is a Phosphoserine.

This sequence belongs to the enolase family. In terms of assembly, homodimer. Requires Mg(2+) as cofactor.

The protein localises to the cytoplasm. It catalyses the reaction (2R)-2-phosphoglycerate = phosphoenolpyruvate + H2O. Its pathway is carbohydrate degradation; glycolysis; pyruvate from D-glyceraldehyde 3-phosphate: step 4/5. This is Enolase 1-1 (eno101) from Schizosaccharomyces pombe (strain 972 / ATCC 24843) (Fission yeast).